The primary structure comprises 154 residues: Snaclec dabocetin subunit alpha (154 aa).

The N-terminal stretch at 1 to 23 is a signal peptide; it reads MGRFISVSFGLLVVFLSLSGTGA. 3 disulfide bridges follow: cysteine 25-cysteine 36, cysteine 53-cysteine 148, and cysteine 123-cysteine 140. The region spanning 32–149 is the C-type lectin domain; that stretch reads HEGHCYKVFK…CGDKNPFICK (118 aa).

This sequence belongs to the snaclec family. Heterodimer of subunits alpha and beta; disulfide-linked. As to expression, expressed by the venom gland.

The protein localises to the secreted. In terms of biological role, inhibits ristocetin-induced platelet aggregation via binding to platelet glycoprotein Ibalpha (GP1BA). The chain is Snaclec dabocetin subunit alpha from Daboia siamensis (Eastern Russel's viper).